Reading from the N-terminus, the 675-residue chain is Potassium-transporting ATPase ATP-binding subunit (675 aa).

4 consecutive transmembrane segments (helical) span residues 34 to 54 (IMFV…FPDI), 65 to 85 (LITI…SEAF), 216 to 236 (IALF…IVTL), and 245 to 265 (LILP…TTIG). Asp304 acts as the 4-aspartylphosphate intermediate in catalysis. ATP-binding positions include Asp341, Glu345, 372–379 (FTAETRMS), and Lys390. The Mg(2+) site is built by Asp513 and Asp517. The next 3 helical transmembrane spans lie at 569–591 (ALTT…ALMM), 611–631 (AIIS…PIAM), and 644–664 (IFIN…FLGI).

It belongs to the cation transport ATPase (P-type) (TC 3.A.3) family. Type IA subfamily. In terms of assembly, the system is composed of three essential subunits: KdpA, KdpB and KdpC.

Its subcellular location is the cell membrane. It carries out the reaction K(+)(out) + ATP + H2O = K(+)(in) + ADP + phosphate + H(+). In terms of biological role, part of the high-affinity ATP-driven potassium transport (or Kdp) system, which catalyzes the hydrolysis of ATP coupled with the electrogenic transport of potassium into the cytoplasm. This subunit is responsible for energy coupling to the transport system and for the release of the potassium ions to the cytoplasm. This chain is Potassium-transporting ATPase ATP-binding subunit, found in Staphylococcus aureus (strain bovine RF122 / ET3-1).